Consider the following 390-residue polypeptide: O-phospho-L-seryl-tRNA:Cys-tRNA synthase 2 (390 aa).

Pyridoxal 5'-phosphate is bound by residues 83 to 84, N187, and 210 to 212; these read AR and SGH. Position 213 is an N6-(pyridoxal phosphate)lysine (K213).

This sequence belongs to the SepCysS family. Homodimer. Interacts with SepRS. Requires pyridoxal 5'-phosphate as cofactor.

The enzyme catalyses O-phospho-L-seryl-tRNA(Cys) + hydrogen sulfide + H(+) = L-cysteinyl-tRNA(Cys) + phosphate. Functionally, converts O-phospho-L-seryl-tRNA(Cys) (Sep-tRNA(Cys)) to L-cysteinyl-tRNA(Cys) (Cys-tRNA(Cys)). The polypeptide is O-phospho-L-seryl-tRNA:Cys-tRNA synthase 2 (Archaeoglobus fulgidus (strain ATCC 49558 / DSM 4304 / JCM 9628 / NBRC 100126 / VC-16)).